A 218-amino-acid chain; its full sequence is Ribose-5-phosphate isomerase A (218 aa).

Substrate contacts are provided by residues 28–31 (TGST), 81–84 (DGAD), and 94–97 (KGGG). Glu103 functions as the Proton acceptor in the catalytic mechanism. Lys121 contacts substrate.

The protein belongs to the ribose 5-phosphate isomerase family. Homodimer.

It carries out the reaction aldehydo-D-ribose 5-phosphate = D-ribulose 5-phosphate. It functions in the pathway carbohydrate degradation; pentose phosphate pathway; D-ribose 5-phosphate from D-ribulose 5-phosphate (non-oxidative stage): step 1/1. Functionally, catalyzes the reversible conversion of ribose-5-phosphate to ribulose 5-phosphate. The protein is Ribose-5-phosphate isomerase A of Shewanella woodyi (strain ATCC 51908 / MS32).